Reading from the N-terminus, the 40-residue chain is Esterase-4 (40 aa).

The protein belongs to the type-B carboxylesterase/lipase family.

It carries out the reaction a carboxylic ester + H2O = an alcohol + a carboxylate + H(+). This Drosophila mojavensis (Fruit fly) protein is Esterase-4 (Est-4).